The primary structure comprises 374 residues: Succinyl-diaminopimelate desuccinylase (374 aa).

Histidine 66 contacts Zn(2+). Aspartate 68 is an active-site residue. Aspartate 99 contributes to the Zn(2+) binding site. Glutamate 133 functions as the Proton acceptor in the catalytic mechanism. Residues glutamate 134, glutamate 162, and histidine 348 each coordinate Zn(2+).

Belongs to the peptidase M20A family. DapE subfamily. Homodimer. Requires Zn(2+) as cofactor. Co(2+) serves as cofactor.

The enzyme catalyses N-succinyl-(2S,6S)-2,6-diaminopimelate + H2O = (2S,6S)-2,6-diaminopimelate + succinate. The protein operates within amino-acid biosynthesis; L-lysine biosynthesis via DAP pathway; LL-2,6-diaminopimelate from (S)-tetrahydrodipicolinate (succinylase route): step 3/3. Catalyzes the hydrolysis of N-succinyl-L,L-diaminopimelic acid (SDAP), forming succinate and LL-2,6-diaminopimelate (DAP), an intermediate involved in the bacterial biosynthesis of lysine and meso-diaminopimelic acid, an essential component of bacterial cell walls. This is Succinyl-diaminopimelate desuccinylase from Coxiella burnetii (strain CbuK_Q154) (Coxiella burnetii (strain Q154)).